We begin with the raw amino-acid sequence, 485 residues long: UBX domain-containing protein 11 (485 aa).

Residues 1–26 are disordered; sequence MSSPLASLSKTRKVPLESEPVNPGRR. The stretch at 67 to 143 forms a coiled coil; it reads HDSELLTSMA…VGEMERFLND (77 aa). The 65-residue stretch at 224–288 folds into the SEP domain; it reads LEPIPLKLYR…VSDLRNQVYP (65 aa). The UBX domain maps to 386–463; that stretch reads PVPPLSMLRI…GLVPNATLLL (78 aa). Residues S479 and S483 each carry the phosphoserine modification.

Interacts with GNA12, GNA13, RND1, RND2 and RND3. In terms of tissue distribution, strongly expressed in testis. Also expressed in lung, brain and thymus.

It localises to the cytoplasm. Its subcellular location is the cytoskeleton. In terms of biological role, may be involved in the reorganization of actin cytoskeleton mediated by RND1, RND2 and RND3. Promotes RHOA activation mediated by GNA12 and GNA13. The chain is UBX domain-containing protein 11 (Ubxn11) from Rattus norvegicus (Rat).